A 285-amino-acid polypeptide reads, in one-letter code: Bis(5'-nucleosyl)-tetraphosphatase, symmetrical (285 aa).

The protein belongs to the Ap4A hydrolase family.

The enzyme catalyses P(1),P(4)-bis(5'-adenosyl) tetraphosphate + H2O = 2 ADP + 2 H(+). Functionally, hydrolyzes diadenosine 5',5'''-P1,P4-tetraphosphate to yield ADP. In Pseudomonas entomophila (strain L48), this protein is Bis(5'-nucleosyl)-tetraphosphatase, symmetrical.